Consider the following 276-residue polypeptide: NAD-capped RNA hydrolase NudC (276 aa).

Arginine 82 lines the substrate pocket. Zn(2+)-binding residues include cysteine 112 and cysteine 115. Glutamate 125 is a substrate binding site. Zn(2+)-binding residues include cysteine 130 and cysteine 133. Tyrosine 138 lines the substrate pocket. The Nudix hydrolase domain maps to 139–262 (PRISPSMIVL…SIARYLIDLY (124 aa)). Residues alanine 172, glutamate 188, and glutamate 192 each coordinate a divalent metal cation. A Nudix box motif is present at residues 173–194 (GFAEPGESAEDCLIREVREEVS). Position 206-213 (206-213 (QCWPFPHS)) interacts with substrate. Glutamate 233 is an a divalent metal cation binding site. Residue alanine 255 coordinates substrate.

This sequence belongs to the Nudix hydrolase family. NudC subfamily. In terms of assembly, homodimer. Requires Mg(2+) as cofactor. The cofactor is Mn(2+). Zn(2+) serves as cofactor.

The enzyme catalyses a 5'-end NAD(+)-phospho-ribonucleoside in mRNA + H2O = a 5'-end phospho-adenosine-phospho-ribonucleoside in mRNA + beta-nicotinamide D-ribonucleotide + 2 H(+). It catalyses the reaction NAD(+) + H2O = beta-nicotinamide D-ribonucleotide + AMP + 2 H(+). It carries out the reaction NADH + H2O = reduced beta-nicotinamide D-ribonucleotide + AMP + 2 H(+). MRNA decapping enzyme that specifically removes the nicotinamide adenine dinucleotide (NAD) cap from a subset of mRNAs by hydrolyzing the diphosphate linkage to produce nicotinamide mononucleotide (NMN) and 5' monophosphate mRNA. The NAD-cap is present at the 5'-end of some mRNAs and stabilizes RNA against 5'-processing. Has preference for mRNAs with a 5'-end purine. Catalyzes the hydrolysis of a broad range of dinucleotide pyrophosphates. In Pseudomonas fluorescens (strain ATCC BAA-477 / NRRL B-23932 / Pf-5), this protein is NAD-capped RNA hydrolase NudC.